Consider the following 3095-residue polypeptide: HD protein homolog (3095 aa).

Disordered stretches follow at residues 105–197 (PHQH…NGNA), 536–561 (QQQQ…TMSG), 1312–1371 (PPQQ…STVI), 1509–1547 (KSTS…TTPS), and 2005–2037 (KELT…KEEE). Residues 115 to 139 (STNLTDHLSQNSVTPSVPTTPNYQQ) show a composition bias toward polar residues. Low complexity-rich tracts occupy residues 140–197 (SPST…NGNA) and 536–551 (QQQQ…QQQQ). Polar residues predominate over residues 552 to 561 (HNLTSSTMSG). Composition is skewed to low complexity over residues 1315–1368 (QQQQ…LNNS), 1510–1547 (STSS…TTPS), and 2008–2018 (TNNNNNNNNNI).

The protein belongs to the huntingtin family.

It localises to the cytoplasm. It is found in the nucleus. Functionally, may play a role in microtubule-mediated transport or vesicle function. This chain is HD protein homolog (htt), found in Dictyostelium discoideum (Social amoeba).